Here is a 330-residue protein sequence, read N- to C-terminus: Aspartate--ammonia ligase (330 aa).

The protein belongs to the class-II aminoacyl-tRNA synthetase family. AsnA subfamily.

It is found in the cytoplasm. The catalysed reaction is L-aspartate + NH4(+) + ATP = L-asparagine + AMP + diphosphate + H(+). It functions in the pathway amino-acid biosynthesis; L-asparagine biosynthesis; L-asparagine from L-aspartate (ammonia route): step 1/1. The protein is Aspartate--ammonia ligase of Cronobacter sakazakii (strain ATCC BAA-894) (Enterobacter sakazakii).